Here is a 340-residue protein sequence, read N- to C-terminus: Coproporphyrin III ferrochelatase (340 aa).

The Fe-coproporphyrin III site is built by serine 52 and tyrosine 121. 2 residues coordinate Fe(2+): histidine 177 and glutamate 260.

Belongs to the ferrochelatase family.

It localises to the cytoplasm. It catalyses the reaction Fe-coproporphyrin III + 2 H(+) = coproporphyrin III + Fe(2+). The protein operates within porphyrin-containing compound metabolism; protoheme biosynthesis. In terms of biological role, involved in coproporphyrin-dependent heme b biosynthesis. Catalyzes the insertion of ferrous iron into coproporphyrin III to form Fe-coproporphyrin III. The chain is Coproporphyrin III ferrochelatase from Mycobacteroides abscessus (strain ATCC 19977 / DSM 44196 / CCUG 20993 / CIP 104536 / JCM 13569 / NCTC 13031 / TMC 1543 / L948) (Mycobacterium abscessus).